Consider the following 322-residue polypeptide: Lymphokine-activated killer T-cell-originated protein kinase (322 aa).

Met-1 bears the N-acetylmethionine mark. 2 positions are modified to phosphothreonine: Thr-9 and Thr-24. Ser-32 is subject to Phosphoserine. One can recognise a Protein kinase domain in the interval 32–322 (SPFMQKLGFG…HIVEALETDV (291 aa)). 38–46 (LGFGTGVNV) serves as a coordination point for ATP. A Phosphoserine modification is found at Ser-59. Lys-64 serves as a coordination point for ATP. Residue Asp-167 is the Proton acceptor of the active site. A Glycyl lysine isopeptide (Lys-Gly) (interchain with G-Cter in SUMO2) cross-link involves residue Lys-169. Residues 320–322 (TDV) are PDZ-interaction.

The protein belongs to the protein kinase superfamily. STE Ser/Thr protein kinase family. MAP kinase kinase subfamily. In terms of assembly, interacts with DLG1 and TP53. Phosphorylated; in a cell-cycle dependent manner at mitosis. Expressed in the testis and placenta. In the testis, restrictedly expressed in outer cell layer of seminiferous tubules.

It catalyses the reaction L-seryl-[protein] + ATP = O-phospho-L-seryl-[protein] + ADP + H(+). It carries out the reaction L-threonyl-[protein] + ATP = O-phospho-L-threonyl-[protein] + ADP + H(+). The enzyme catalyses L-tyrosyl-[protein] + ATP = O-phospho-L-tyrosyl-[protein] + ADP + H(+). Activated by phosphorylation. Functionally, phosphorylates MAP kinase p38. Seems to be active only in mitosis. May also play a role in the activation of lymphoid cells. When phosphorylated, forms a complex with TP53, leading to TP53 destabilization and attenuation of G2/M checkpoint during doxorubicin-induced DNA damage. In Homo sapiens (Human), this protein is Lymphokine-activated killer T-cell-originated protein kinase (PBK).